The primary structure comprises 202 residues: MVIRPEDPEDYVAPAAQRVRAGTLLLANTDLLEPTFRRSVIYIVEHNEGGTLGVVLNRPSETAVYNVLPQWAKLAAKPKTMFIGGPVKRDAALCLAVLRIGADPDGVAGLRHVAGRLVMVDLDAEPDLIAPLVDGLRIFVGYSGWTIGQLKGEIERDDWIVLSALPSDVLVGKRADLWAQVLRRQPLLLSLLATHPIDVSRN.

The protein belongs to the UPF0301 (AlgH) family.

This chain is UPF0301 protein ML0028, found in Mycobacterium leprae (strain TN).